A 388-amino-acid chain; its full sequence is Succinate--CoA ligase [ADP-forming] subunit beta (388 aa).

Residues 9 to 244 form the ATP-grasp domain; it reads KEILRKFGVA…LDEEDPAEIE (236 aa). Residues Lys46, 53–55, Glu99, Ala102, and Glu107 contribute to the ATP site; that span reads GRG. Mg(2+) is bound by residues Asn199 and Asp213. Residues Asn264 and 321 to 323 each bind substrate; that span reads GIM.

The protein belongs to the succinate/malate CoA ligase beta subunit family. Heterotetramer of two alpha and two beta subunits. Mg(2+) serves as cofactor.

It catalyses the reaction succinate + ATP + CoA = succinyl-CoA + ADP + phosphate. It carries out the reaction GTP + succinate + CoA = succinyl-CoA + GDP + phosphate. It participates in carbohydrate metabolism; tricarboxylic acid cycle; succinate from succinyl-CoA (ligase route): step 1/1. In terms of biological role, succinyl-CoA synthetase functions in the citric acid cycle (TCA), coupling the hydrolysis of succinyl-CoA to the synthesis of either ATP or GTP and thus represents the only step of substrate-level phosphorylation in the TCA. The beta subunit provides nucleotide specificity of the enzyme and binds the substrate succinate, while the binding sites for coenzyme A and phosphate are found in the alpha subunit. The protein is Succinate--CoA ligase [ADP-forming] subunit beta of Burkholderia thailandensis (strain ATCC 700388 / DSM 13276 / CCUG 48851 / CIP 106301 / E264).